The following is a 181-amino-acid chain: Adenylyl-sulfate kinase (181 aa).

An ATP-binding site is contributed by 13 to 20; sequence GVSGAGKS. Catalysis depends on Ser-87, which acts as the Phosphoserine intermediate.

This sequence belongs to the APS kinase family.

The enzyme catalyses adenosine 5'-phosphosulfate + ATP = 3'-phosphoadenylyl sulfate + ADP + H(+). It functions in the pathway sulfur metabolism; hydrogen sulfide biosynthesis; sulfite from sulfate: step 2/3. Its function is as follows. Catalyzes the synthesis of activated sulfate. This Burkholderia ambifaria (strain ATCC BAA-244 / DSM 16087 / CCUG 44356 / LMG 19182 / AMMD) (Burkholderia cepacia (strain AMMD)) protein is Adenylyl-sulfate kinase.